We begin with the raw amino-acid sequence, 264 residues long: tRNA pseudouridine synthase A (264 aa).

The Nucleophile role is filled by Asp51. Tyr109 provides a ligand contact to substrate.

The protein belongs to the tRNA pseudouridine synthase TruA family. As to quaternary structure, homodimer.

It carries out the reaction uridine(38/39/40) in tRNA = pseudouridine(38/39/40) in tRNA. Its function is as follows. Formation of pseudouridine at positions 38, 39 and 40 in the anticodon stem and loop of transfer RNAs. This chain is tRNA pseudouridine synthase A, found in Actinobacillus succinogenes (strain ATCC 55618 / DSM 22257 / CCUG 43843 / 130Z).